The following is a 70-amino-acid chain: Large ribosomal subunit protein bL31c (70 aa).

Belongs to the bacterial ribosomal protein bL31 family. Type A subfamily. Part of the 50S ribosomal subunit.

Its subcellular location is the plastid. The protein localises to the chloroplast. In terms of biological role, binds the 23S rRNA. This is Large ribosomal subunit protein bL31c from Pyropia yezoensis (Susabi-nori).